A 367-amino-acid polypeptide reads, in one-letter code: Cis-3-hydroxy-L-proline dehydratase (367 aa).

Catalysis depends on lysine 165, which acts as the Proton donor/acceptor. Mg(2+) is bound by residues aspartate 193, glutamate 218, and aspartate 241. Lysine 265 functions as the Proton donor/acceptor in the catalytic mechanism.

The protein belongs to the mandelate racemase/muconate lactonizing enzyme family. Mg(2+) serves as cofactor.

The catalysed reaction is cis-3-hydroxy-L-proline = 1-pyrroline-2-carboxylate + H2O. Its function is as follows. Catalyzes the dehydration of cis-3-hydroxy-L-proline (c3LHyp) to Delta(1)-pyrroline-2-carboxylate (Pyr2C). Is likely involved in a degradation pathway that converts c3LHyp to L-proline, which allows L.aggregata to grow on c3LHyp as a sole carbon source. Also catalyzes the epimerization of c3LHyp to trans-3-hydroxy-D-proline (t3DHyp), a competing reaction occurring from the same enolate anion intermediate. L-proline, t3LHyp, t4LHyp, c4DHyp and their methylated derivatives are not substrates. This chain is Cis-3-hydroxy-L-proline dehydratase, found in Roseibium aggregatum (strain ATCC 25650 / DSM 13394 / JCM 20685 / NBRC 16684 / NCIMB 2208 / IAM 12614 / B1) (Stappia aggregata).